Here is a 210-residue protein sequence, read N- to C-terminus: Proteasome subunit beta 2 (210 aa).

A propeptide spans 1 to 12 (removed in mature form; by autocatalysis); that stretch reads MSNNVEEKILHG. Thr13 functions as the Nucleophile in the catalytic mechanism.

Belongs to the peptidase T1B family. As to quaternary structure, the 20S proteasome core is composed of 14 alpha and 14 beta subunits that assemble into four stacked heptameric rings, resulting in a barrel-shaped structure. The two inner rings, each composed of seven catalytic beta subunits, are sandwiched by two outer rings, each composed of seven alpha subunits. The catalytic chamber with the active sites is on the inside of the barrel. Has a gated structure, the ends of the cylinder being occluded by the N-termini of the alpha-subunits. Is capped at one or both ends by the proteasome regulatory ATPase, PAN.

Its subcellular location is the cytoplasm. The enzyme catalyses Cleavage of peptide bonds with very broad specificity.. With respect to regulation, the formation of the proteasomal ATPase PAN-20S proteasome complex, via the docking of the C-termini of PAN into the intersubunit pockets in the alpha-rings, triggers opening of the gate for substrate entry. Interconversion between the open-gate and close-gate conformations leads to a dynamic regulation of the 20S proteasome proteolysis activity. Its function is as follows. Component of the proteasome core, a large protease complex with broad specificity involved in protein degradation. The protein is Proteasome subunit beta 2 of Nitrosopumilus maritimus (strain SCM1).